A 167-amino-acid polypeptide reads, in one-letter code: Phosphopantetheine adenylyltransferase (167 aa).

Residue Thr-9 participates in substrate binding. ATP-binding positions include 9–10 (TF) and His-17. Positions 41, 73, and 87 each coordinate substrate. ATP contacts are provided by residues 88-90 (GLR), Glu-98, and 123-129 (YQFISGT).

This sequence belongs to the bacterial CoaD family. Homohexamer. The cofactor is Mg(2+).

Its subcellular location is the cytoplasm. The enzyme catalyses (R)-4'-phosphopantetheine + ATP + H(+) = 3'-dephospho-CoA + diphosphate. It participates in cofactor biosynthesis; coenzyme A biosynthesis; CoA from (R)-pantothenate: step 4/5. Its function is as follows. Reversibly transfers an adenylyl group from ATP to 4'-phosphopantetheine, yielding dephospho-CoA (dPCoA) and pyrophosphate. In Ralstonia pickettii (strain 12J), this protein is Phosphopantetheine adenylyltransferase.